Consider the following 357-residue polypeptide: Carbamoyl phosphate synthase small chain (357 aa).

A CPSase region spans residues Met1 to Asn168. Positions 46, 220, and 222 each coordinate L-glutamine. The 186-residue stretch at Lys172 to Lys357 folds into the Glutamine amidotransferase type-1 domain. Cys247 serves as the catalytic Nucleophile. L-glutamine-binding residues include Leu248, Gln251, Asn289, Gly291, and Tyr292. Residues His331 and Asp333 contribute to the active site.

It belongs to the CarA family. As to quaternary structure, composed of two chains; the small (or glutamine) chain promotes the hydrolysis of glutamine to ammonia, which is used by the large (or ammonia) chain to synthesize carbamoyl phosphate. Tetramer of heterodimers (alpha,beta)4.

The catalysed reaction is hydrogencarbonate + L-glutamine + 2 ATP + H2O = carbamoyl phosphate + L-glutamate + 2 ADP + phosphate + 2 H(+). It catalyses the reaction L-glutamine + H2O = L-glutamate + NH4(+). It participates in amino-acid biosynthesis; L-arginine biosynthesis; carbamoyl phosphate from bicarbonate: step 1/1. It functions in the pathway pyrimidine metabolism; UMP biosynthesis via de novo pathway; (S)-dihydroorotate from bicarbonate: step 1/3. Functionally, small subunit of the glutamine-dependent carbamoyl phosphate synthetase (CPSase). CPSase catalyzes the formation of carbamoyl phosphate from the ammonia moiety of glutamine, carbonate, and phosphate donated by ATP, constituting the first step of 2 biosynthetic pathways, one leading to arginine and/or urea and the other to pyrimidine nucleotides. The small subunit (glutamine amidotransferase) binds and cleaves glutamine to supply the large subunit with the substrate ammonia. The sequence is that of Carbamoyl phosphate synthase small chain from Lactococcus lactis subsp. lactis (strain IL1403) (Streptococcus lactis).